A 112-amino-acid polypeptide reads, in one-letter code: uncharacterized protein (112 aa).

N-linked (GlcNAc...) asparagine; by host glycosylation is found at N29 and N60. Residues 66–86 (IFNGLGFILIVIFIYLLLITL) form a helical membrane-spanning segment.

This sequence belongs to the asfivirus B117L family.

The protein localises to the host membrane. It localises to the virion. This is an uncharacterized protein from Ornithodoros (relapsing fever ticks).